Consider the following 1203-residue polypeptide: Zinc finger and BTB domain-containing protein 38 (1203 aa).

The region spanning C33 to R100 is the BTB domain. Residue K43 forms a Glycyl lysine isopeptide (Lys-Gly) (interchain with G-Cter in SUMO2) linkage. S130 is modified (phosphoserine). Glycyl lysine isopeptide (Lys-Gly) (interchain with G-Cter in SUMO2) cross-links involve residues K145, K148, K151, and K260. The disordered stretch occupies residues E230–A334. Positions T269–N280 are enriched in polar residues. Positions P299–E522 are interaction with CBFA2T3. A compositionally biased stretch (basic and acidic residues) spans G313–E322. The C2H2-type 1 zinc finger occupies Y341–H363. The C2H2-type 2; degenerate zinc finger occupies F370–R394. 3 C2H2-type zinc fingers span residues Y459–H481, Y487–H509, and Y515–H538. Residues K549 and K556 each participate in a glycyl lysine isopeptide (Lys-Gly) (interchain with G-Cter in SUMO2) cross-link. Polar residues-rich tracts occupy residues R581–P598, L607–P628, P635–A644, and S731–A741. Disordered stretches follow at residues R581–A644 and S731–N776. Residues K747–S757 show a composition bias toward basic and acidic residues. Glycyl lysine isopeptide (Lys-Gly) (interchain with G-Cter in SUMO2) cross-links involve residues K750, K755, K796, K806, K813, K834, K842, and K849. 2 disordered regions span residues K857–G882 and F895–Y914. Positions T866–G877 are enriched in basic and acidic residues. Residues K915, K971, K976, K984, K988, K998, K1024, and K1033 each participate in a glycyl lysine isopeptide (Lys-Gly) (interchain with G-Cter in SUMO2) cross-link. C2H2-type zinc fingers lie at residues Y1017–H1039, Y1045–H1067, F1073–H1095, Y1101–H1123, and F1132–H1154. Glycyl lysine isopeptide (Lys-Gly) (interchain with G-Cter in SUMO2) cross-links involve residues K1116, K1139, K1142, K1157, and K1190. Residues N1172–E1203 form a disordered region.

Interacts with CBFA2T3, ZBTB4 and RBBP6. In terms of processing, ubiquitinated by RBBP6; leading to its degradation by the proteasome. Widely expressed throughout the adult brain where it is found mainly in neurons. Also expressed in the adrenal medulla. Not detected in non-neural tissues including heart, spleen, liver and muscle. In the embryo, expressed in the developing brain and spinal cord but not in the migratory neural crest. Also expressed in the limbs, transiently in somites, and in the embryonic liver. In the embryonic neural tube, expression is restricted to late postmitotic neurons.

The protein resides in the nucleus. It is found in the chromosome. In terms of biological role, transcriptional regulator with bimodal DNA-binding specificity. Binds with a higher affinity to methylated CpG dinucleotides in the consensus sequence 5'-CGCG-3' but can also bind to E-box elements (5'-CACGTG-3'). Can also bind specifically to a single methyl-CpG pair. Represses transcription in a methyl-CpG-dependent manner. Plays an important role in regulating DNA-replication and common fragile sites (CFS) stability in a RBBP6- and MCM10-dependent manner; represses expression of MCM10 which plays an important role in DNA-replication. Acts as a transcriptional activator. May be involved in the differentiation and/or survival of late postmitotic neurons. The sequence is that of Zinc finger and BTB domain-containing protein 38 from Rattus norvegicus (Rat).